The primary structure comprises 355 residues: 3-dehydroquinate synthase (355 aa).

Residues 71–76 (EGEERK), 105–109 (GVVGD), 129–130 (TS), Lys-142, and Lys-151 each bind NAD(+). Zn(2+) contacts are provided by Glu-184, His-246, and His-263.

It belongs to the sugar phosphate cyclases superfamily. Dehydroquinate synthase family. It depends on Co(2+) as a cofactor. Requires Zn(2+) as cofactor. NAD(+) serves as cofactor.

It is found in the cytoplasm. It catalyses the reaction 7-phospho-2-dehydro-3-deoxy-D-arabino-heptonate = 3-dehydroquinate + phosphate. Its pathway is metabolic intermediate biosynthesis; chorismate biosynthesis; chorismate from D-erythrose 4-phosphate and phosphoenolpyruvate: step 2/7. Catalyzes the conversion of 3-deoxy-D-arabino-heptulosonate 7-phosphate (DAHP) to dehydroquinate (DHQ). This Streptococcus pneumoniae (strain 70585) protein is 3-dehydroquinate synthase.